The sequence spans 226 residues: Thiamine-phosphate synthase (226 aa).

Residues 46-50 and aspartate 83 each bind 4-amino-2-methyl-5-(diphosphooxymethyl)pyrimidine; that span reads QFRDK. Residues aspartate 84 and aspartate 103 each contribute to the Mg(2+) site. Residue serine 122 coordinates 4-amino-2-methyl-5-(diphosphooxymethyl)pyrimidine. Residue 149–151 coordinates 2-[(2R,5Z)-2-carboxy-4-methylthiazol-5(2H)-ylidene]ethyl phosphate; that stretch reads TQS. Lysine 152 provides a ligand contact to 4-amino-2-methyl-5-(diphosphooxymethyl)pyrimidine. 2-[(2R,5Z)-2-carboxy-4-methylthiazol-5(2H)-ylidene]ethyl phosphate-binding positions include glycine 181 and 201-202; that span reads IT.

The protein belongs to the thiamine-phosphate synthase family. Mg(2+) serves as cofactor.

The catalysed reaction is 2-[(2R,5Z)-2-carboxy-4-methylthiazol-5(2H)-ylidene]ethyl phosphate + 4-amino-2-methyl-5-(diphosphooxymethyl)pyrimidine + 2 H(+) = thiamine phosphate + CO2 + diphosphate. The enzyme catalyses 2-(2-carboxy-4-methylthiazol-5-yl)ethyl phosphate + 4-amino-2-methyl-5-(diphosphooxymethyl)pyrimidine + 2 H(+) = thiamine phosphate + CO2 + diphosphate. It carries out the reaction 4-methyl-5-(2-phosphooxyethyl)-thiazole + 4-amino-2-methyl-5-(diphosphooxymethyl)pyrimidine + H(+) = thiamine phosphate + diphosphate. It participates in cofactor biosynthesis; thiamine diphosphate biosynthesis; thiamine phosphate from 4-amino-2-methyl-5-diphosphomethylpyrimidine and 4-methyl-5-(2-phosphoethyl)-thiazole: step 1/1. In terms of biological role, condenses 4-methyl-5-(beta-hydroxyethyl)thiazole monophosphate (THZ-P) and 2-methyl-4-amino-5-hydroxymethyl pyrimidine pyrophosphate (HMP-PP) to form thiamine monophosphate (TMP). The sequence is that of Thiamine-phosphate synthase from Haemophilus influenzae (strain 86-028NP).